A 403-amino-acid chain; its full sequence is Zinc finger CCHC domain-containing protein 3 (403 aa).

Residues 1–158 (MATGGGAEEE…PLQDEPAAAA (158 aa)) are disordered. Basic and acidic residues-rich tracts occupy residues 26 to 38 (ARGE…REKM) and 47 to 65 (LAEK…REEE). Over residues 67-79 (GGGGGSAGLGGPA) the composition is skewed to gly residues. Over residues 95-121 (GDPKGRRRDPAGEAVDPRKKKGAAEAG) the composition is skewed to basic and acidic residues. The span at 128–139 (AAAAAMATPARP) shows a compositional bias: low complexity. Tyr-201 carries the post-translational modification Phosphotyrosine. CCHC-type zinc fingers lie at residues 335–350 (CFKC…SCTQ), 352–368 (RCFR…YCRK), and 372–387 (CNLC…QCPK).

As to quaternary structure, interacts with CGAS. Interacts with RIGI. Interacts with IFIH1/MDA5.

It localises to the cytoplasm. In terms of biological role, nucleic acid-binding protein involved in innate immune response to DNA and RNA viruses. Binds DNA and RNA in the cytoplasm and acts by promoting recognition of viral nucleic acids by virus sensors, such as RIGI, IFIH1/MDA5 and CGAS. Acts as a co-sensor for recognition of double-stranded DNA (dsDNA) by cGAS in the cytoplasm, thereby playing a role in innate immune response to cytosolic dsDNA and DNA virus. Binds dsDNA and probably acts by promoting sensing of dsDNA by CGAS, leading to enhance CGAS oligomerization and activation. Promotes sensing of viral RNA by RIGI-like receptors proteins RIGI and IFIH1/MDA5 via two mechanisms: binds double-stranded RNA (dsRNA), enhancing the binding of RIGI and IFIH1/MDA5 to dsRNA and promotes 'Lys-63'-linked ubiquitination and subsequent activation of RIGI and IFIH1/MDA5. The chain is Zinc finger CCHC domain-containing protein 3 from Homo sapiens (Human).